The chain runs to 105 residues: ATP-dependent Clp protease adapter protein ClpS (105 aa).

Belongs to the ClpS family. As to quaternary structure, binds to the N-terminal domain of the chaperone ClpA.

Involved in the modulation of the specificity of the ClpAP-mediated ATP-dependent protein degradation. This is ATP-dependent Clp protease adapter protein ClpS from Klebsiella pneumoniae (strain 342).